A 211-amino-acid polypeptide reads, in one-letter code: Ribosomal RNA small subunit methyltransferase G (211 aa).

S-adenosyl-L-methionine-binding positions include G81, L86, 132-133, and R147; that span reads VE.

Belongs to the methyltransferase superfamily. RNA methyltransferase RsmG family.

It localises to the cytoplasm. The enzyme catalyses guanosine(527) in 16S rRNA + S-adenosyl-L-methionine = N(7)-methylguanosine(527) in 16S rRNA + S-adenosyl-L-homocysteine. Functionally, specifically methylates the N7 position of guanine in position 527 of 16S rRNA. This Actinobacillus succinogenes (strain ATCC 55618 / DSM 22257 / CCUG 43843 / 130Z) protein is Ribosomal RNA small subunit methyltransferase G.